A 203-amino-acid polypeptide reads, in one-letter code: FMN-dependent NADH:quinone oxidoreductase (203 aa).

FMN contacts are provided by residues Ser9 and 15 to 17 (SKS).

The protein belongs to the azoreductase type 1 family. Homodimer. The cofactor is FMN.

It catalyses the reaction 2 a quinone + NADH + H(+) = 2 a 1,4-benzosemiquinone + NAD(+). The enzyme catalyses N,N-dimethyl-1,4-phenylenediamine + anthranilate + 2 NAD(+) = 2-(4-dimethylaminophenyl)diazenylbenzoate + 2 NADH + 2 H(+). Functionally, quinone reductase that provides resistance to thiol-specific stress caused by electrophilic quinones. Also exhibits azoreductase activity. Catalyzes the reductive cleavage of the azo bond in aromatic azo compounds to the corresponding amines. This chain is FMN-dependent NADH:quinone oxidoreductase, found in Bordetella avium (strain 197N).